Here is a 375-residue protein sequence, read N- to C-terminus: MQCALYDAGRCRSCQWITQPIPEQLSAKTADLKNLLADFPVEEWCAPVSGPEQGFRNKAKMVVSGSVEKPLLGMLHRDGTPEDLCDCPLYPASFAPVFAALKPFIARAGLTPYNVARKRGELKYILLTESQSDGGMMLRFVLRSETKLAQLRKALPWLQEQLPQLKVITVNIQPVHMAIMEGETEIYLTEQQALAERFNDVPLWIRPQSFFQTNPAVASQLYATARDWVRQLPVKHMWDLFCGVGGFGLHCATPDMQLTGIEIASEAIACAKQSAAELGLTRLQFQALDSTQFATAQGEVPELVLVNPPRRGIGKPLCDYLSTMAPRFIIYSSCNAQTMAKDVRELPGYRIERVQLFDMFPHTAHYEVLTLLVKQ.

4 residues coordinate [4Fe-4S] cluster: C3, C11, C14, and C87. S-adenosyl-L-methionine-binding residues include Q212, F241, E262, and N307. C334 (nucleophile) is an active-site residue.

It belongs to the class I-like SAM-binding methyltransferase superfamily. RNA M5U methyltransferase family. RlmC subfamily.

It carries out the reaction uridine(747) in 23S rRNA + S-adenosyl-L-methionine = 5-methyluridine(747) in 23S rRNA + S-adenosyl-L-homocysteine + H(+). Its function is as follows. Catalyzes the formation of 5-methyl-uridine at position 747 (m5U747) in 23S rRNA. The chain is 23S rRNA (uracil(747)-C(5))-methyltransferase RlmC from Escherichia coli (strain SE11).